The following is a 49-amino-acid chain: MGRFPEAEERLLNKKICMRCNARNAIRATRCRKCGYSALRVKSKESKGA.

This sequence belongs to the eukaryotic ribosomal protein eL40 family.

The protein is Large ribosomal subunit protein eL40 of Methanosarcina barkeri (strain Fusaro / DSM 804).